The sequence spans 304 residues: Acetyl-coenzyme A carboxylase carboxyl transferase subunit beta (304 aa).

Residues 23 to 292 (VWTKCDSCGQ…PNPEAPREGV (270 aa)) enclose the CoA carboxyltransferase N-terminal domain. Zn(2+) contacts are provided by Cys-27, Cys-30, Cys-46, and Cys-49. The C4-type zinc finger occupies 27 to 49 (CDSCGQVLYRAELERNLEVCPKC). The tract at residues 284–304 (NPEAPREGVVVPPVPDQEPEA) is disordered. Over residues 295–304 (PPVPDQEPEA) the composition is skewed to pro residues.

Belongs to the AccD/PCCB family. Acetyl-CoA carboxylase is a heterohexamer composed of biotin carboxyl carrier protein (AccB), biotin carboxylase (AccC) and two subunits each of ACCase subunit alpha (AccA) and ACCase subunit beta (AccD). Requires Zn(2+) as cofactor.

It localises to the cytoplasm. The catalysed reaction is N(6)-carboxybiotinyl-L-lysyl-[protein] + acetyl-CoA = N(6)-biotinyl-L-lysyl-[protein] + malonyl-CoA. It participates in lipid metabolism; malonyl-CoA biosynthesis; malonyl-CoA from acetyl-CoA: step 1/1. Component of the acetyl coenzyme A carboxylase (ACC) complex. Biotin carboxylase (BC) catalyzes the carboxylation of biotin on its carrier protein (BCCP) and then the CO(2) group is transferred by the transcarboxylase to acetyl-CoA to form malonyl-CoA. The protein is Acetyl-coenzyme A carboxylase carboxyl transferase subunit beta of Shigella flexneri.